Here is a 1199-residue protein sequence, read N- to C-terminus: AP-3 complex subunit delta-1 (1199 aa).

N-acetylalanine is present on Ala2. HEAT repeat units lie at residues 34–71, 142–179, 180–216, 218–254, 257–296, 298–336, 337–373, 375–409, and 521–558; these read KYIS…LGYD, DLAR…KYPE, SLRP…RNPK, YLSL…LEPR, KKLI…GMPN, SASI…THPK, SVQS…KKNL, EIVK…QSNY, and VYVQ…ERLP. 2 disordered regions span residues 623 to 695 and 724 to 963; these read LDAW…RYQD and YVKL…EPIP. 3 positions are modified to phosphoserine: Ser632, Ser634, and Ser636. Basic and acidic residues-rich tracts occupy residues 639-651 and 665-675; these read EKPK…EEPR and LARRREARKQE. A coiled-coil region spans residues 659-679; the sequence is EEDEEELARRREARKQEQANN. Residue Ser688 is modified to Phosphoserine. Positions 722–750 form a coiled coil; the sequence is DQYVKLEEQRRHRQRLEKDKKRKKKEKGK. Positions 732–754 are enriched in basic residues; it reads RHRQRLEKDKKRKKKEKGKRRHS. Residues Ser754 and Ser755 each carry the phosphoserine modification. Phosphothreonine is present on Thr758. Phosphoserine occurs at positions 760, 784, and 825. Residues 773–790 show a composition bias toward acidic residues; sequence ITEEMPENALPSDEDDKD. Residues 791–836 show a composition bias toward basic and acidic residues; the sequence is PNDPYRALDIDLDKPLADSEKLPVQKHRNAEAVKSPEKEGVLGVEK. The span at 837–846 shows a compositional bias: basic residues; that stretch reads KSKKPKKKEK. A coiled-coil region spans residues 843–863; the sequence is KKEKKTKEREREKKDKKGEDL. Over residues 847-862 the composition is skewed to basic and acidic residues; the sequence is KTKEREREKKDKKGED. Positions 870–880 are enriched in pro residues; the sequence is TPPPAAAPIPA. The segment covering 894-916 has biased composition (basic and acidic residues); sequence PKDECEVLKGEEEDHVDHDQERK. Residues 911–934 are a coiled coil; the sequence is HDQERKSSRHKKKKHRKEKEKEER. Over residues 917 to 928 the composition is skewed to basic residues; it reads SSRHKKKKHRKE.

It belongs to the adaptor complexes large subunit family. As to quaternary structure, adaptor protein complex 3 (AP-3) is a heterotetramer composed of two large adaptins (delta-type subunit AP3D1 and beta-type subunit AP3B1 or AP3B2), a medium adaptin (mu-type subunit AP3M1 or AP3M2) and a small adaptin (sigma-type subunit APS1 or AP3S2). AP-3 associates with the BLOC-1 complex. Interacts with SLC30A2. Interacts with CLN3 (via dileucine motif); this interaction facilitates lysosomal targeting.

It is found in the cytoplasm. Its subcellular location is the golgi apparatus membrane. Functionally, part of the AP-3 complex, an adaptor-related complex which is not clathrin-associated. The complex is associated with the Golgi region as well as more peripheral structures. It facilitates the budding of vesicles from the Golgi membrane and may be directly involved in trafficking to lysosomes. Involved in process of CD8+ T-cell and NK cell degranulation. In concert with the BLOC-1 complex, AP-3 is required to target cargos into vesicles assembled at cell bodies for delivery into neurites and nerve terminals. This is AP-3 complex subunit delta-1 (Ap3d1) from Mus musculus (Mouse).